The sequence spans 653 residues: Phospholipid-transporting ATPase VD (653 aa).

The Cytoplasmic segment spans residues 1–375 (MACNLCYEAE…GHWCYTRLSN (375 aa)). Residues Glu14, Phe56, Lys80, Arg124, Thr204, Gly205, Asp206, 259–266 (GLIITGKT), Arg293, and Lys299 each bind ATP. Asp319 contributes to the Mg(2+) binding site. ATP is bound by residues Asn322 and Asp323. Position 323 (Asp323) interacts with Mg(2+). The helical transmembrane segment at 376–396 (MILYFFYKNVAYVNLLFWYQF) threads the bilayer. The Exoplasmic loop segment spans residues 397-407 (FCGFSGTSMTD). The chain crosses the membrane as a helical span at residues 408–428 (YWVLIFFNLLFTSAPPVIYGV). Residues 429–458 (LEKDVSAETLMQLPELYKSGQKSEAYLPHT) lie on the Cytoplasmic side of the membrane. Residues 459–480 (FWITLLDAFYQSLVCFFVPYFT) form a helical membrane-spanning segment. The Exoplasmic loop segment spans residues 481–487 (YQGSDID). Residues 488 to 510 (IFAFGNPLNTAALFIILLHLIIE) traverse the membrane as a helical segment. The Cytoplasmic portion of the chain corresponds to 511–516 (SKSLTW). Residues 517–537 (IHMLVITGSILSYFLFAIVFG) form a helical membrane-spanning segment. Residues 538-555 (AMCVTCNPPSNPYWIMQE) lie on the Exoplasmic loop side of the membrane. A helical membrane pass occupies residues 556-580 (HVLDPVFYLVCILTTCIALLPRFVY). Over 581-653 (RGAGKMNQVT…AFEMARPCKD (73 aa)) the chain is Cytoplasmic.

The protein belongs to the cation transport ATPase (P-type) (TC 3.A.3) family. Type IV subfamily. Component of a P4-ATPase flippase complex which consists of a catalytic alpha subunit ATP10A and an accessory beta subunit TMEM30A. It depends on Mg(2+) as a cofactor. Post-translationally, autophosphorylated at the conserved aspartate of the P-type ATPase signature sequence.

The protein resides in the cell membrane. Its subcellular location is the endoplasmic reticulum membrane. It catalyses the reaction ATP + H2O + phospholipidSide 1 = ADP + phosphate + phospholipidSide 2.. The catalysed reaction is a beta-D-glucosyl-(1&lt;-&gt;1')-N-acylsphing-4-enine(out) + ATP + H2O = a beta-D-glucosyl-(1&lt;-&gt;1')-N-acylsphing-4-enine(in) + ADP + phosphate + H(+). Catalytic component of a P4-ATPase flippase complex, which catalyzes the hydrolysis of ATP coupled to the transport of glucosylceramide (GlcCer) from the outer to the inner leaflet of the plasma membrane. This is Phospholipid-transporting ATPase VD (ATP10D) from Macaca fascicularis (Crab-eating macaque).